The sequence spans 326 residues: Biotin synthase (326 aa).

Residues 48–277 form the Radical SAM core domain; that stretch reads FGAGKVDLCS…SARIRMAGGR (230 aa). Residues C66, C70, and C73 each contribute to the [4Fe-4S] cluster site. Residues S110, C142, C202, and R272 each contribute to the [2Fe-2S] cluster site.

It belongs to the radical SAM superfamily. Biotin synthase family. Homodimer. It depends on [4Fe-4S] cluster as a cofactor. Requires [2Fe-2S] cluster as cofactor.

It catalyses the reaction (4R,5S)-dethiobiotin + (sulfur carrier)-SH + 2 reduced [2Fe-2S]-[ferredoxin] + 2 S-adenosyl-L-methionine = (sulfur carrier)-H + biotin + 2 5'-deoxyadenosine + 2 L-methionine + 2 oxidized [2Fe-2S]-[ferredoxin]. It participates in cofactor biosynthesis; biotin biosynthesis; biotin from 7,8-diaminononanoate: step 2/2. Catalyzes the conversion of dethiobiotin (DTB) to biotin by the insertion of a sulfur atom into dethiobiotin via a radical-based mechanism. The protein is Biotin synthase of Heliobacterium modesticaldum (strain ATCC 51547 / Ice1).